Consider the following 318-residue polypeptide: Probable metal transport system membrane protein CT_070 (318 aa).

The next 10 helical transmembrane spans lie at 1–21 (MVAS…LVFF), 39–59 (IQVI…TFLV), 64–84 (AMYA…VCLF), 94–114 (QALT…IHFI), 124–144 (ASTA…LVFL), 170–190 (IFLV…SFVC), 196–216 (IFAF…MLLL), 226–246 (AVGV…AKLI), 252–272 (EMMV…PALS), and 285–305 (TSGL…VFVC).

This sequence belongs to the ABC-3 integral membrane protein family.

Its subcellular location is the cell inner membrane. Part of an ATP-driven transport system CT_067/CT_068/CT_069/CT_070 for a metal. This Chlamydia trachomatis serovar D (strain ATCC VR-885 / DSM 19411 / UW-3/Cx) protein is Probable metal transport system membrane protein CT_070.